The primary structure comprises 248 residues: 4-hydroxy-tetrahydrodipicolinate reductase (248 aa).

Position 13–18 (13–18) interacts with NAD(+); it reads GITGRL. Arg36 serves as a coordination point for NADP(+). NAD(+) contacts are provided by residues 84–86 and 108–111; these read GTT and AANF. His140 serves as the catalytic Proton donor/acceptor. His141 is a (S)-2,3,4,5-tetrahydrodipicolinate binding site. The Proton donor role is filled by Lys144. Residue 150 to 151 participates in (S)-2,3,4,5-tetrahydrodipicolinate binding; the sequence is GT.

Belongs to the DapB family.

It is found in the cytoplasm. It carries out the reaction (S)-2,3,4,5-tetrahydrodipicolinate + NAD(+) + H2O = (2S,4S)-4-hydroxy-2,3,4,5-tetrahydrodipicolinate + NADH + H(+). The catalysed reaction is (S)-2,3,4,5-tetrahydrodipicolinate + NADP(+) + H2O = (2S,4S)-4-hydroxy-2,3,4,5-tetrahydrodipicolinate + NADPH + H(+). It participates in amino-acid biosynthesis; L-lysine biosynthesis via DAP pathway; (S)-tetrahydrodipicolinate from L-aspartate: step 4/4. Functionally, catalyzes the conversion of 4-hydroxy-tetrahydrodipicolinate (HTPA) to tetrahydrodipicolinate. In Gluconobacter oxydans (strain 621H) (Gluconobacter suboxydans), this protein is 4-hydroxy-tetrahydrodipicolinate reductase.